The sequence spans 58 residues: Large ribosomal subunit protein eL37 (58 aa).

Residues Cys-20, Cys-23, Cys-35, and Cys-38 each contribute to the Zn(2+) site. The C4-type zinc finger occupies 20-38; the sequence is CRRCGEKSYHTKKKVCSSC.

This sequence belongs to the eukaryotic ribosomal protein eL37 family. Zn(2+) is required as a cofactor.

Binds to the 23S rRNA. The sequence is that of Large ribosomal subunit protein eL37 from Haloquadratum walsbyi (strain DSM 16790 / HBSQ001).